A 600-amino-acid polypeptide reads, in one-letter code: Oligopeptide-binding protein OppA (600 aa).

The first 22 residues, Met1 to Ala22, serve as a signal peptide directing secretion. Cys23 carries N-palmitoyl cysteine lipidation. Cys23 is lipidated: S-diacylglycerol cysteine.

It belongs to the bacterial solute-binding protein 5 family. As to quaternary structure, the complex is composed of two ATP-binding proteins (OppD and OppF), two transmembrane proteins (OppB and OppC) and a solute-binding protein (OppA).

The protein resides in the cell membrane. In terms of biological role, part of the ABC transporter complex OppABCDF involved in the uptake of oligopeptides. Essential for uptake of peptides larger than three amino acids and for growth in milk. The chain is Oligopeptide-binding protein OppA from Lactococcus lactis subsp. lactis (Streptococcus lactis).